A 380-amino-acid chain; its full sequence is Crotonobetainyl-CoA reductase (380 aa).

This sequence belongs to the acyl-CoA dehydrogenase family. Homotetramer. Requires FAD as cofactor.

Its subcellular location is the cytoplasm. It catalyses the reaction 4-(trimethylamino)butanoyl-CoA + oxidized [electron-transfer flavoprotein] + H(+) = crotonobetainyl-CoA + reduced [electron-transfer flavoprotein]. Its pathway is amine and polyamine metabolism; carnitine metabolism. Its function is as follows. Catalyzes the reduction of crotonobetainyl-CoA to gamma-butyrobetainyl-CoA. The protein is Crotonobetainyl-CoA reductase of Escherichia coli (strain UTI89 / UPEC).